A 787-amino-acid polypeptide reads, in one-letter code: MNQKTLKALEYDKIVEILKNMAKSTPAKEYFENLIPSTNVADIENELNKVDESYRYVLKYGNLPTLEFENILPSLKKSKLGATLNPHEILQIGKVLKLSYEMRTYLSFTQDFSFLESMKKRLVNLKEVISRIDQTFLTPDEILDTASSKLKEIRDKIRKLENKIRDELNSMIRDPKIQRFLQEPIITIRGEKLLLPVKAEFRNEVKGIVHDQSATGATLFVEPFVCVEISNQIKILKNQEKEEIERILQEISSLIASYCEVIETSFYALVELDIVFTKAIWAKEMNASKPIINASGIINLKKARHPLIQKDKVVPIDIHLGKDFDVLIITGPNTGGKTVTLKTVGLFCLLCQSGIFIPADEGSELCIFQKIFADIGDDQSIVQSLSTFSAHMKNIIEITKNADDKTLVLLDEIGAGTDPEEGAALAKAILKYLSEKGSKVIATTHYGELKIFAQQEDRFENASCEFDVKTLKPTYRLLIGIPGRSNALVISSNLGLDKGIVEMARGYLSQKTIDLDRIINEMEQKRKEAEENLELAQKLKHEAQALKAAYEEEKKRFETERERIRKKAINEAKEIVESSQYEIENLFKDLRKLAENLKEKEVLKELEEKKREYERLIQSISQQVKQEAESKTKKTIQNLRLGQKVYVRSFDAEGFVESLPDSKGNLTVQIGIMKINVNLSDIEEVEGQDSKIYQIASRNVIIKEKNIDMSIDVRGKTSDDAILEVDKYLDDAYTAGLKQVTIIHGKGTGVLRQAIRNFLRRHPHVKSFRDGTYGEGEQGVTVVELKD.

331–338 (GPNTGGKT) provides a ligand contact to ATP. Residues 711-786 (IDVRGKTSDD…EQGVTVVELK (76 aa)) enclose the Smr domain.

This sequence belongs to the DNA mismatch repair MutS family. MutS2 subfamily. As to quaternary structure, homodimer. Binds to stalled ribosomes, contacting rRNA.

Functionally, endonuclease that is involved in the suppression of homologous recombination and thus may have a key role in the control of bacterial genetic diversity. Its function is as follows. Acts as a ribosome collision sensor, splitting the ribosome into its 2 subunits. Detects stalled/collided 70S ribosomes which it binds and splits by an ATP-hydrolysis driven conformational change. Acts upstream of the ribosome quality control system (RQC), a ribosome-associated complex that mediates the extraction of incompletely synthesized nascent chains from stalled ribosomes and their subsequent degradation. Probably generates substrates for RQC. The chain is Endonuclease MutS2 from Caldicellulosiruptor bescii (strain ATCC BAA-1888 / DSM 6725 / KCTC 15123 / Z-1320) (Anaerocellum thermophilum).